Reading from the N-terminus, the 314-residue chain is 2,3-dihydroxyphenylpropionate/2,3-dihydroxicinnamic acid 1,2-dioxygenase (314 aa).

The active-site Proton donor is the His115. His179 acts as the Proton acceptor in catalysis.

Belongs to the LigB/MhpB extradiol dioxygenase family. Homotetramer. Fe(2+) serves as cofactor.

It carries out the reaction 3-(2,3-dihydroxyphenyl)propanoate + O2 = (2Z,4E)-2-hydroxy-6-oxonona-2,4-dienedioate + H(+). The enzyme catalyses (2E)-3-(2,3-dihydroxyphenyl)prop-2-enoate + O2 = (2Z,4E,7E)-2-hydroxy-6-oxonona-2,4,7-trienedioate + H(+). The protein operates within aromatic compound metabolism; 3-phenylpropanoate degradation. Its function is as follows. Catalyzes the non-heme iron(II)-dependent oxidative cleavage of 2,3-dihydroxyphenylpropionic acid and 2,3-dihydroxicinnamic acid into 2-hydroxy-6-ketononadienedioate and 2-hydroxy-6-ketononatrienedioate, respectively. This is 2,3-dihydroxyphenylpropionate/2,3-dihydroxicinnamic acid 1,2-dioxygenase from Escherichia coli (strain 55989 / EAEC).